Reading from the N-terminus, the 454-residue chain is tRNA-2-methylthio-N(6)-dimethylallyladenosine synthase (454 aa).

Residues 6 to 122 (RRYHITTYGC…LQDLLEQVAS (117 aa)) enclose the MTTase N-terminal domain. [4Fe-4S] cluster is bound by residues Cys-15, Cys-51, Cys-85, Cys-157, Cys-161, and Cys-164. Residues 143–384 (RDSAVTAWVN…GVCAELRSQR (242 aa)) form the Radical SAM core domain. The TRAM domain occupies 383-447 (QRYANRIEEV…SFSLTGEPLS (65 aa)).

This sequence belongs to the methylthiotransferase family. MiaB subfamily. In terms of assembly, monomer. [4Fe-4S] cluster is required as a cofactor.

It is found in the cytoplasm. The catalysed reaction is N(6)-dimethylallyladenosine(37) in tRNA + (sulfur carrier)-SH + AH2 + 2 S-adenosyl-L-methionine = 2-methylsulfanyl-N(6)-dimethylallyladenosine(37) in tRNA + (sulfur carrier)-H + 5'-deoxyadenosine + L-methionine + A + S-adenosyl-L-homocysteine + 2 H(+). Its function is as follows. Catalyzes the methylthiolation of N6-(dimethylallyl)adenosine (i(6)A), leading to the formation of 2-methylthio-N6-(dimethylallyl)adenosine (ms(2)i(6)A) at position 37 in tRNAs that read codons beginning with uridine. This is tRNA-2-methylthio-N(6)-dimethylallyladenosine synthase from Acaryochloris marina (strain MBIC 11017).